A 430-amino-acid chain; its full sequence is Tol-Pal system protein TolB (430 aa).

Residues 1–21 (MKQAFRVALGFFLLWASVLHA) form the signal peptide.

It belongs to the TolB family. In terms of assembly, the Tol-Pal system is composed of five core proteins: the inner membrane proteins TolA, TolQ and TolR, the periplasmic protein TolB and the outer membrane protein Pal. They form a network linking the inner and outer membranes and the peptidoglycan layer.

It localises to the periplasm. Its function is as follows. Part of the Tol-Pal system, which plays a role in outer membrane invagination during cell division and is important for maintaining outer membrane integrity. TolB occupies a key intermediary position in the Tol-Pal system because it communicates directly with both membrane-embedded components, Pal in the outer membrane and TolA in the inner membrane. The protein is Tol-Pal system protein TolB of Sodalis glossinidius (strain morsitans).